The sequence spans 1040 residues: Kinesin-like protein KIN-14H (1040 aa).

In terms of domain architecture, Calponin-homology (CH) spans 54 to 176 (DLRRYEAARW…CVLALKSYRE (123 aa)). Residues 208-242 (SEVPVDAVTNSPSSTPSSEQPLLDQSDSNTKNDGT) are disordered. Residues 215–242 (VTNSPSSTPSSEQPLLDQSDSNTKNDGT) show a composition bias toward polar residues. Residues 434–754 (SIRVYCRVRP…LKFAERVATV (321 aa)) enclose the Kinesin motor domain. Residue 517 to 524 (GQTGSGKT) coordinates ATP. A coiled-coil region spans residues 761–796 (VNKDTSEVKELKEQIASLKLALARKESGADQTQLQR). Positions 809–818 (LGVSSSFSKS) are enriched in low complexity. 3 disordered regions span residues 809–871 (LGVS…GKEE), 887–926 (EDEI…KCNS), and 969–1040 (MPRP…QNPK). Over residues 840-851 (IEGQSDSASSLD) the composition is skewed to polar residues. A compositionally biased stretch (basic and acidic residues) spans 887 to 923 (EDEITRSSKPENRAHTQLEKRTSSLKREATRGVDKNK). The segment covering 1018 to 1031 (SPGQTSSRHNNSTV) has biased composition (polar residues).

This sequence belongs to the TRAFAC class myosin-kinesin ATPase superfamily. Kinesin family. KIN-14 subfamily.

This is Kinesin-like protein KIN-14H from Arabidopsis thaliana (Mouse-ear cress).